The primary structure comprises 609 residues: Alpha-fetoprotein (609 aa).

An N-terminal signal peptide occupies residues Met-1–Ser-18. 3 consecutive Albumin domains span residues Arg-19 to Thr-210, Lys-211 to Gln-402, and Lys-403 to Ser-601. His-22 serves as a coordination point for Cu(2+). Asn-42 is a glycosylation site (N-linked (GlcNAc...) asparagine). Cystine bridges form between Cys-99–Cys-114, Cys-113–Cys-124, Cys-148–Cys-193, Cys-192–Cys-201, Cys-224–Cys-270, Cys-269–Cys-277, Cys-289–Cys-303, and Cys-302–Cys-313. Phosphoserine is present on residues Ser-111, Ser-115, and Ser-117. Asn-251 is a glycosylation site (N-linked (GlcNAc...) asparagine). Ser-344 carries the phosphoserine modification. 7 disulfide bridges follow: Cys-384–Cys-393, Cys-416–Cys-462, Cys-461–Cys-472, Cys-485–Cys-501, Cys-500–Cys-511, Cys-538–Cys-583, and Cys-582–Cys-591. Ser-444 bears the Phosphoserine mark.

The protein belongs to the ALB/AFP/VDB family. In terms of assembly, dimeric and trimeric forms have been found in addition to the monomeric form. As to expression, plasma. Synthesized by the fetal liver and yolk sac.

It localises to the secreted. Its function is as follows. Binds copper, nickel, and fatty acids as well as, and bilirubin less well than, serum albumin. The polypeptide is Alpha-fetoprotein (AFP) (Pan troglodytes (Chimpanzee)).